Reading from the N-terminus, the 351-residue chain is UDP-3-O-acylglucosamine N-acyltransferase (351 aa).

The active-site Proton acceptor is H257.

Belongs to the transferase hexapeptide repeat family. LpxD subfamily. In terms of assembly, homotrimer.

The enzyme catalyses a UDP-3-O-[(3R)-3-hydroxyacyl]-alpha-D-glucosamine + a (3R)-hydroxyacyl-[ACP] = a UDP-2-N,3-O-bis[(3R)-3-hydroxyacyl]-alpha-D-glucosamine + holo-[ACP] + H(+). Its pathway is bacterial outer membrane biogenesis; LPS lipid A biosynthesis. In terms of biological role, catalyzes the N-acylation of UDP-3-O-acylglucosamine using 3-hydroxyacyl-ACP as the acyl donor. Is involved in the biosynthesis of lipid A, a phosphorylated glycolipid that anchors the lipopolysaccharide to the outer membrane of the cell. The sequence is that of UDP-3-O-acylglucosamine N-acyltransferase from Methylorubrum extorquens (strain CM4 / NCIMB 13688) (Methylobacterium extorquens).